A 503-amino-acid polypeptide reads, in one-letter code: MPQFVDRVVLHLQAGDGGHGCASVHREKFVPLGGPDGGNGGHGGDIILEVSSQVHTLLDFHFHPHIKAQRGNNGAGDHRHGARGEDLVLQVPEGTVVLNSKGEAIADLTGKGTRMIVAAGGHGGLGNAALASKSRKAPGFALLGEPGEAKDVILELKSMADVGLVGFPSAGKSSLISVLSAAKPKIADYPFTTLVPNLGVVNVGHEVFTVADVPGLIPGASEGKGLGLDFLRHIERTAVLAHVVDAASLEADRDPVADIKALEKELANYQEELASDSGLGDLRERPRVIILNKMDVPDAADMADLQEEELKEFGWPIFRISTVAHKGLDELKYALMDIVKAHRKANPVEEKPAQVITPKGLRKRSGGRFAEFEVEADPSAEDAFIVRGEKIERWIRQTDFENDEAVGYLADRLAKAGVEEALYKAGADAGSEVTIGEITFEWDPQTAAGVDVMRSGRGTDVRLEQNTRATPEERKRASQARRGLIDENDFGDGEVAERERWQG.

One can recognise an Obg domain in the interval 2 to 159 (PQFVDRVVLH…KDVILELKSM (158 aa)). The OBG-type G domain maps to 160 to 340 (ADVGLVGFPS…LKYALMDIVK (181 aa)). Residues 166 to 173 (GFPSAGKS), 191 to 195 (FTTLV), 212 to 215 (DVPG), 292 to 295 (NKMD), and 321 to 323 (STV) contribute to the GTP site. Serine 173 and threonine 193 together coordinate Mg(2+). One can recognise an OCT domain in the interval 371 to 444 (EFEVEADPSA…IGEITFEWDP (74 aa)). Residues 457–476 (RGTDVRLEQNTRATPEERKR) show a composition bias toward basic and acidic residues. A disordered region spans residues 457–503 (RGTDVRLEQNTRATPEERKRASQARRGLIDENDFGDGEVAERERWQG).

Belongs to the TRAFAC class OBG-HflX-like GTPase superfamily. OBG GTPase family. Monomer. The cofactor is Mg(2+).

It is found in the cytoplasm. An essential GTPase which binds GTP, GDP and possibly (p)ppGpp with moderate affinity, with high nucleotide exchange rates and a fairly low GTP hydrolysis rate. Plays a role in control of the cell cycle, stress response, ribosome biogenesis and in those bacteria that undergo differentiation, in morphogenesis control. This Corynebacterium jeikeium (strain K411) protein is GTPase Obg.